We begin with the raw amino-acid sequence, 350 residues long: UDP-glucose 4-epimerase (350 aa).

Residues 13 to 15 (GYI), 34 to 38 (DNLCN), 67 to 68 (DI), Phe89, and Lys93 contribute to the NAD(+) site. 133–135 (SAT) is a substrate binding site. The active-site Proton acceptor is Tyr158. NAD(+)-binding residues include Lys162 and Tyr186. Substrate is bound by residues 186–188 (YFN), 207–209 (NNL), 225–227 (SVY), Arg240, and 303–306 (RSGD).

Belongs to the NAD(P)-dependent epimerase/dehydratase family. In terms of assembly, homodimer. Requires NAD(+) as cofactor.

It carries out the reaction UDP-alpha-D-glucose = UDP-alpha-D-galactose. The enzyme catalyses UDP-N-acetyl-alpha-D-glucosamine = UDP-N-acetyl-alpha-D-galactosamine. Its pathway is carbohydrate metabolism; galactose metabolism. Catalyzes two distinct but analogous reactions: the reversible epimerization of UDP-glucose to UDP-galactose and the reversible epimerization of UDP-N-acetylglucosamine to UDP-N-acetylgalactosamine. The reaction with UDP-Gal plays a critical role in the Leloir pathway of galactose catabolism in which galactose is converted to the glycolytic intermediate glucose 6-phosphate. It contributes to the catabolism of dietary galactose and enables the endogenous biosynthesis of both UDP-Gal and UDP-GalNAc when exogenous sources are limited. Both UDP-sugar interconversions are important in the synthesis of glycoproteins and glycolipids. This chain is UDP-glucose 4-epimerase (Gale), found in Drosophila melanogaster (Fruit fly).